The chain runs to 381 residues: Cytochrome b (381 aa).

Transmembrane regions (helical) follow at residues 34-54 (FGSL…FLAM), 78-99 (WLIR…YLHI), 114-134 (WNIG…GYVL), and 179-199 (FFAF…IHLL). Histidine 84 and histidine 98 together coordinate heme b. Heme b is bound by residues histidine 183 and histidine 197. Histidine 202 lines the a ubiquinone pocket. The next 4 membrane-spanning stretches (helical) occupy residues 227–247 (YKDL…ALFL), 289–309 (LGGV…PMLH), 321–341 (MTQF…WIGG), and 348–368 (FILV…IIIP).

This sequence belongs to the cytochrome b family. As to quaternary structure, the cytochrome bc1 complex contains 3 respiratory subunits (MT-CYB, CYC1 and UQCRFS1), 2 core proteins (UQCRC1 and UQCRC2) and probably 6 low-molecular weight proteins. Requires heme b as cofactor.

It is found in the mitochondrion inner membrane. Its function is as follows. Component of the ubiquinol-cytochrome c reductase complex (complex III or cytochrome b-c1 complex) that is part of the mitochondrial respiratory chain. The b-c1 complex mediates electron transfer from ubiquinol to cytochrome c. Contributes to the generation of a proton gradient across the mitochondrial membrane that is then used for ATP synthesis. The chain is Cytochrome b (mt-cyb) from Squalus acanthias (Spiny dogfish).